The sequence spans 261 residues: Syntaxin-7 (261 aa).

S2 is subject to N-acetylserine. Residues 2-238 (SYTPGIGGDS…DYQRKSRKTL (237 aa)) lie on the Cytoplasmic side of the membrane. At T4 the chain carries Phosphothreonine. Residue S45 is modified to Phosphoserine. Residues 47–68 (ELRQLLQQKQQYTNQLAKETDK) are a coiled coil. A Phosphoserine modification is found at S75. T79 carries the post-translational modification Phosphothreonine. A phosphoserine mark is found at S125, S126, S129, and S205. Residues 128-148 (VSGGFPEDSSKEKNLVSWESQ) form a disordered region. The 63-residue stretch at 165–227 (LRLIHERESS…QQANQQLSRA (63 aa)) folds into the t-SNARE coiled-coil homology domain. A helical; Anchor for type IV membrane protein membrane pass occupies residues 239-259 (CIIIFILVVRIVIICLIVWGL). The Vesicular portion of the chain corresponds to 260-261 (KG).

This sequence belongs to the syntaxin family. In terms of assembly, interacts with VPS11, VPS16 and VPS18. Interacts with VPS33A. Forms a SNARE complex with VTI1B, STX8 and VAMP8 which functions in the homotypic fusion of late endosomes. Component of the SNARE complex composed of STX7, STX8, VAMP7 and VTI1B that is required for heterotypic fusion of late endosomes with lysosomes. Interacts with TPC1.

It is found in the early endosome membrane. Functionally, may be involved in protein trafficking from the plasma membrane to the early endosome (EE) as well as in homotypic fusion of endocytic organelles. Mediates the endocytic trafficking from early endosomes to late endosomes and lysosomes. This chain is Syntaxin-7 (Stx7), found in Mus musculus (Mouse).